Consider the following 616-residue polypeptide: Chaperone protein HscA (616 aa).

The protein belongs to the heat shock protein 70 family.

Its function is as follows. Chaperone involved in the maturation of iron-sulfur cluster-containing proteins. Has a low intrinsic ATPase activity which is markedly stimulated by HscB. Involved in the maturation of IscU. This is Chaperone protein HscA from Escherichia coli O6:H1 (strain CFT073 / ATCC 700928 / UPEC).